The chain runs to 71 residues: Brevinin-1SN2 (71 aa).

Positions 1–22 are cleaved as a signal peptide; the sequence is MFTMKKSLLLIFFLGTINLSLC. The propeptide at 23–45 is removed in mature form; sequence EEERNADEDEKRDGDDESDVEVQ. Cysteine 65 and cysteine 71 are disulfide-bonded.

It belongs to the frog skin active peptide (FSAP) family. Brevinin subfamily. Expressed by the skin glands.

It is found in the secreted. In terms of biological role, antimicrobial peptide. Active against a variety of Gram-negative and Gram-positive bacterial strains. Active against fungus C.glabrata 090902 and C.albicans ATCC 10231. Shows hemolytic activity against human erythrocytes. In Sylvirana spinulosa (Fine-spined frog), this protein is Brevinin-1SN2.